We begin with the raw amino-acid sequence, 409 residues long: Phosphopentomutase (409 aa).

Residues Asp-10, Asp-308, His-313, Asp-349, His-350, and His-361 each coordinate Mn(2+).

It belongs to the phosphopentomutase family. It depends on Mn(2+) as a cofactor.

Its subcellular location is the cytoplasm. The catalysed reaction is 2-deoxy-alpha-D-ribose 1-phosphate = 2-deoxy-D-ribose 5-phosphate. It carries out the reaction alpha-D-ribose 1-phosphate = D-ribose 5-phosphate. It functions in the pathway carbohydrate degradation; 2-deoxy-D-ribose 1-phosphate degradation; D-glyceraldehyde 3-phosphate and acetaldehyde from 2-deoxy-alpha-D-ribose 1-phosphate: step 1/2. Its function is as follows. Isomerase that catalyzes the conversion of deoxy-ribose 1-phosphate (dRib-1-P) and ribose 1-phosphate (Rib-1-P) to deoxy-ribose 5-phosphate (dRib-5-P) and ribose 5-phosphate (Rib-5-P), respectively. This chain is Phosphopentomutase, found in Buchnera aphidicola subsp. Schizaphis graminum (strain Sg).